Consider the following 283-residue polypeptide: Aquaporin PIP2-5 (283 aa).

Helical transmembrane passes span 37–57 and 74–94; these read AVIA…ATVI and CGGV…FILV. The NPA 1 motif lies at 106 to 108; that stretch reads NPA. Helical transmembrane passes span 125–145, 167–187, and 199–219; these read ILYI…VKGF, GTGL…VFSA, and VPVL…LATI. The NPA 2 signature appears at 227–229; sequence NPA. A helical membrane pass occupies residues 249-269; sequence IFWVGPFIGAAIAALYHQIVL.

The protein belongs to the MIP/aquaporin (TC 1.A.8) family. PIP (TC 1.A.8.11) subfamily. Expressed in roots.

The protein resides in the cell membrane. Functionally, water channel required to facilitate the transport of water across cell membrane. May play a role in root water uptake. This chain is Aquaporin PIP2-5 (PIP2-5), found in Oryza sativa subsp. japonica (Rice).